The following is a 482-amino-acid chain: Protein farnesyltransferase subunit beta (482 aa).

PFTB repeat units follow at residues 131-172, 182-223, 230-271, and 278-319; these read ESNA…VTLG, REKM…SILN, TQGL…ILIN, and LDSL…VLLQ. (2E,6E)-farnesyl diphosphate-binding positions include 256–259 and 298–301; these read HGGY and RTNK. Residues Asp-304 and Cys-306 each coordinate Zn(2+). 307-310 serves as a coordination point for (2E,6E)-farnesyl diphosphate; it reads YTFW. A disordered region spans residues 329–372; that stretch reads VHGSSHISEGTNEEHHAHDEDDLEDSDDDDDSDEDNDEDSVNGH. Over residues 348 to 368 the composition is skewed to acidic residues; that stretch reads EDDLEDSDDDDDSDEDNDEDS. The PFTB 5 repeat unit spans residues 391–433; it reads SLGLQRYVLLCSKIPDGGFRDKPRKPRDFYHTCYCLSGLSVAQ. His-421 provides a ligand contact to Zn(2+).

Belongs to the protein prenyltransferase subunit beta family. In terms of assembly, heterodimer of FTA and FTB (farnesyltransferase). Heterodimer of an alpha and a beta subunit. The cofactor is Zn(2+).

The enzyme catalyses L-cysteinyl-[protein] + (2E,6E)-farnesyl diphosphate = S-(2E,6E)-farnesyl-L-cysteinyl-[protein] + diphosphate. In terms of biological role, catalyzes the transfer of a farnesyl moiety from farnesyl diphosphate to a cysteine at the fourth position from the C-terminus of several proteins having the C-terminal sequence Cys-aliphatic-aliphatic-X (CaaX). The beta subunit is responsible for peptide-binding. Acts as an abscisic acid (ABA) negative regulator by mediating ASG2 farnesylation and consequently monitoring its subcellular localization. Involved in responses to salt (NaCl) and osmotic (e.g. in response to mannitol and PEG) stresses. The chain is Protein farnesyltransferase subunit beta (FTB) from Arabidopsis thaliana (Mouse-ear cress).